Here is a 131-residue protein sequence, read N- to C-terminus: Lymphocyte antigen 6E (131 aa).

Residues 1–20 form the signal peptide; sequence MKIFLPVLLAALLGVERASS. One can recognise a UPAR/Ly6 domain in the interval 21-101; it reads LMCFSCLNQK…CCQSFLCNFS (81 aa). 5 disulfide bridges follow: Cys23-Cys48, Cys26-Cys35, Cys41-Cys71, Cys75-Cys92, and Cys93-Cys98. N-linked (GlcNAc...) asparagine glycosylation is present at Asn99. Ser101 is lipidated: GPI-anchor amidated serine. Positions 102–131 are cleaved as a propeptide — removed in mature form; sequence AADGGLRASVTLLGAGLLLSLLPALLRFGP.

Interacts with CHRNA4. In terms of tissue distribution, widely expressed, predominantly in liver, kidney, ovary, spleen and peripheral blood Leukocytes.

It is found in the cell membrane. Functionally, GPI-anchored cell surface protein that regulates T-lymphocytes proliferation, differentiation, and activation. Regulates the T-cell receptor (TCR) signaling by interacting with component CD3Z/CD247 at the plasma membrane, leading to CD3Z/CD247 phosphorylation modulation. Restricts the entry of human coronaviruses, including SARS-CoV, MERS-CoV and SARS-CoV-2, by interfering with spike protein-mediated membrane fusion. Also plays an essential role in placenta formation by acting as the main receptor for syncytin-A (SynA). Therefore, participates in the normal fusion of syncytiotrophoblast layer I (SynT-I) and in the proper morphogenesis of both fetal and maternal vasculatures within the placenta. May also act as a modulator of nicotinic acetylcholine receptors (nAChRs) activity. (Microbial infection) Promotes entry, likely through an enhanced virus-cell fusion process, of various viruses including HIV-1, West Nile virus, dengue virus and Zika virus. In contrast, the paramyxovirus PIV5, which enters at the plasma membrane, does not require LY6E. Mechanistically, adopts a microtubule-like organization upon viral infection and enhances viral uncoating after endosomal escape. The sequence is that of Lymphocyte antigen 6E from Homo sapiens (Human).